The following is a 242-amino-acid chain: Small ribosomal subunit protein uS2 (242 aa).

The protein belongs to the universal ribosomal protein uS2 family.

The sequence is that of Small ribosomal subunit protein uS2 from Shewanella loihica (strain ATCC BAA-1088 / PV-4).